Reading from the N-terminus, the 386-residue chain is S-adenosylmethionine synthase (386 aa).

His-14 contributes to the ATP binding site. Asp-16 serves as a coordination point for Mg(2+). Glu-42 lines the K(+) pocket. 2 residues coordinate L-methionine: Glu-55 and Gln-101. Positions 101–111 (QSADIALGVDE) are flexible loop. ATP-binding positions include 166 to 168 (DGK), 233 to 234 (RF), Asp-242, 248 to 249 (RK), Ala-265, and Lys-269. Asp-242 provides a ligand contact to L-methionine. Lys-273 is an L-methionine binding site.

This sequence belongs to the AdoMet synthase family. Homotetramer; dimer of dimers. Mg(2+) serves as cofactor. The cofactor is K(+).

The protein resides in the cytoplasm. The catalysed reaction is L-methionine + ATP + H2O = S-adenosyl-L-methionine + phosphate + diphosphate. Its pathway is amino-acid biosynthesis; S-adenosyl-L-methionine biosynthesis; S-adenosyl-L-methionine from L-methionine: step 1/1. In terms of biological role, catalyzes the formation of S-adenosylmethionine (AdoMet) from methionine and ATP. The overall synthetic reaction is composed of two sequential steps, AdoMet formation and the subsequent tripolyphosphate hydrolysis which occurs prior to release of AdoMet from the enzyme. In Acholeplasma laidlawii (strain PG-8A), this protein is S-adenosylmethionine synthase.